The sequence spans 353 residues: Peroxisome assembly protein 12-A (353 aa).

Over M1 to S19 the chain is Peroxisomal matrix. A helical membrane pass occupies residues I20 to S47. Residues N48 to R51 are Cytoplasmic-facing. A helical membrane pass occupies residues Y52 to S76. Residues W77–P104 lie on the Peroxisomal matrix side of the membrane. The chain crosses the membrane as a helical span at residues R105 to E134. Over E135–S139 the chain is Cytoplasmic. The helical transmembrane segment at I140–L178 threads the bilayer. Topologically, residues W179–S243 are peroxisomal matrix. A helical transmembrane segment spans residues S244–N271. At N272–G353 the chain is on the cytoplasmic side. Zn(2+) contacts are provided by C298, C301, C319, and C322. The segment at C298–G337 adopts an RING-type; degenerate zinc-finger fold.

It belongs to the pex2/pex10/pex12 family. As to quaternary structure, component of the PEX2-PEX10-PEX12 retrotranslocation channel.

The protein resides in the peroxisome membrane. Its pathway is protein modification; protein ubiquitination. In terms of biological role, component of a retrotranslocation channel required for peroxisome organization by mediating export of the PEX5 receptor from peroxisomes to the cytosol, thereby promoting PEX5 recycling. The retrotranslocation channel is composed of PEX2, PEX10 and PEX12; each subunit contributing transmembrane segments that coassemble into an open channel that specifically allows the passage of PEX5 through the peroxisomal membrane. PEX12 also regulates PEX5 recycling by activating the E3 ubiquitin-protein ligase activity of PEX10. When PEX5 recycling is compromised, PEX12 stimulates PEX10-mediated polyubiquitination of PEX5, leading to its subsequent degradation. The sequence is that of Peroxisome assembly protein 12-A from Xenopus laevis (African clawed frog).